Consider the following 231-residue polypeptide: MAHPAQLGLQNATSPIMEELIAFHDHALMIIFLISSLVLYVISLMLTTKLTHTSTMNAQEIEMIWTILPAIILIMIALPSLRILYMTDEFNKPYLTLKAIGHQWYWSYEYSDYEDLAFDSYITPTYFLEPGEFRLLEVDNRTTLPMEADIRMLISSQDVLHSWAVPSLGVKADAIPGRLNQVMLASMRPGLFYGQCSEICGSNHSFMPIVLEFIYFQDFEVWASYLYIVSL.

Residues 1–14 (MAHPAQLGLQNATS) lie on the Mitochondrial intermembrane side of the membrane. Residues 15–45 (PIMEELIAFHDHALMIIFLISSLVLYVISLM) traverse the membrane as a helical segment. Residues 46–59 (LTTKLTHTSTMNAQ) are Mitochondrial matrix-facing. A helical transmembrane segment spans residues 60-87 (EIEMIWTILPAIILIMIALPSLRILYMT). At 88–231 (DEFNKPYLTL…WASYLYIVSL (144 aa)) the chain is on the mitochondrial intermembrane side. Cu cation contacts are provided by histidine 161, cysteine 196, glutamate 198, cysteine 200, histidine 204, and methionine 207. Residue glutamate 198 participates in Mg(2+) binding.

The protein belongs to the cytochrome c oxidase subunit 2 family. In terms of assembly, component of the cytochrome c oxidase (complex IV, CIV), a multisubunit enzyme composed of 14 subunits. The complex is composed of a catalytic core of 3 subunits MT-CO1, MT-CO2 and MT-CO3, encoded in the mitochondrial DNA, and 11 supernumerary subunits COX4I, COX5A, COX5B, COX6A, COX6B, COX6C, COX7A, COX7B, COX7C, COX8 and NDUFA4, which are encoded in the nuclear genome. The complex exists as a monomer or a dimer and forms supercomplexes (SCs) in the inner mitochondrial membrane with NADH-ubiquinone oxidoreductase (complex I, CI) and ubiquinol-cytochrome c oxidoreductase (cytochrome b-c1 complex, complex III, CIII), resulting in different assemblies (supercomplex SCI(1)III(2)IV(1) and megacomplex MCI(2)III(2)IV(2)). Found in a complex with TMEM177, COA6, COX18, COX20, SCO1 and SCO2. Interacts with TMEM177 in a COX20-dependent manner. Interacts with COX20. Interacts with COX16. The cofactor is Cu cation.

The protein localises to the mitochondrion inner membrane. The enzyme catalyses 4 Fe(II)-[cytochrome c] + O2 + 8 H(+)(in) = 4 Fe(III)-[cytochrome c] + 2 H2O + 4 H(+)(out). Its function is as follows. Component of the cytochrome c oxidase, the last enzyme in the mitochondrial electron transport chain which drives oxidative phosphorylation. The respiratory chain contains 3 multisubunit complexes succinate dehydrogenase (complex II, CII), ubiquinol-cytochrome c oxidoreductase (cytochrome b-c1 complex, complex III, CIII) and cytochrome c oxidase (complex IV, CIV), that cooperate to transfer electrons derived from NADH and succinate to molecular oxygen, creating an electrochemical gradient over the inner membrane that drives transmembrane transport and the ATP synthase. Cytochrome c oxidase is the component of the respiratory chain that catalyzes the reduction of oxygen to water. Electrons originating from reduced cytochrome c in the intermembrane space (IMS) are transferred via the dinuclear copper A center (CU(A)) of subunit 2 and heme A of subunit 1 to the active site in subunit 1, a binuclear center (BNC) formed by heme A3 and copper B (CU(B)). The BNC reduces molecular oxygen to 2 water molecules using 4 electrons from cytochrome c in the IMS and 4 protons from the mitochondrial matrix. The protein is Cytochrome c oxidase subunit 2 (MT-CO2) of Alouatta palliata (Mantled howler monkey).